Reading from the N-terminus, the 390-residue chain is Succinate--CoA ligase [ADP-forming] subunit beta (390 aa).

Residues 9 to 244 enclose the ATP-grasp domain; it reads KSLFQQYGIP…ISQEDVREAK (236 aa). ATP is bound by residues lysine 46, glutamate 99, leucine 102, and glutamate 107. 2 residues coordinate Mg(2+): asparagine 199 and aspartate 213. Substrate-binding positions include asparagine 264 and 321–323; that span reads GIV.

The protein belongs to the succinate/malate CoA ligase beta subunit family. Heterotetramer of two alpha and two beta subunits. Requires Mg(2+) as cofactor.

It catalyses the reaction succinate + ATP + CoA = succinyl-CoA + ADP + phosphate. It carries out the reaction GTP + succinate + CoA = succinyl-CoA + GDP + phosphate. It participates in carbohydrate metabolism; tricarboxylic acid cycle; succinate from succinyl-CoA (ligase route): step 1/1. Its function is as follows. Succinyl-CoA synthetase functions in the citric acid cycle (TCA), coupling the hydrolysis of succinyl-CoA to the synthesis of either ATP or GTP and thus represents the only step of substrate-level phosphorylation in the TCA. The beta subunit provides nucleotide specificity of the enzyme and binds the substrate succinate, while the binding sites for coenzyme A and phosphate are found in the alpha subunit. The protein is Succinate--CoA ligase [ADP-forming] subunit beta of Hydrogenovibrio crunogenus (strain DSM 25203 / XCL-2) (Thiomicrospira crunogena).